The primary structure comprises 305 residues: Dihydroorotate dehydrogenase B (NAD(+)), catalytic subunit (305 aa).

Residues S23 and 47–48 (KG) each bind FMN. Residues K47 and 71-75 (NAIGL) each bind substrate. FMN contacts are provided by N101 and N129. N129 provides a ligand contact to substrate. C132 (nucleophile) is an active-site residue. Residues K167 and I193 each contribute to the FMN site. 194-195 (NT) serves as a coordination point for substrate. FMN is bound by residues G219, 245–246 (GG), and 267–268 (GT).

It belongs to the dihydroorotate dehydrogenase family. Type 1 subfamily. In terms of assembly, heterotetramer of 2 PyrK and 2 PyrD type B subunits. The cofactor is FMN.

It localises to the cytoplasm. The catalysed reaction is (S)-dihydroorotate + NAD(+) = orotate + NADH + H(+). It functions in the pathway pyrimidine metabolism; UMP biosynthesis via de novo pathway; orotate from (S)-dihydroorotate (NAD(+) route): step 1/1. In terms of biological role, catalyzes the conversion of dihydroorotate to orotate with NAD(+) as electron acceptor. This Geotalea uraniireducens (strain Rf4) (Geobacter uraniireducens) protein is Dihydroorotate dehydrogenase B (NAD(+)), catalytic subunit (pyrD).